The primary structure comprises 470 residues: tRNA(Ile)-lysidine synthase (470 aa).

32 to 37 is an ATP binding site; the sequence is SGGVDS.

It belongs to the tRNA(Ile)-lysidine synthase family.

It localises to the cytoplasm. The enzyme catalyses cytidine(34) in tRNA(Ile2) + L-lysine + ATP = lysidine(34) in tRNA(Ile2) + AMP + diphosphate + H(+). Its function is as follows. Ligates lysine onto the cytidine present at position 34 of the AUA codon-specific tRNA(Ile) that contains the anticodon CAU, in an ATP-dependent manner. Cytidine is converted to lysidine, thus changing the amino acid specificity of the tRNA from methionine to isoleucine. In Shewanella woodyi (strain ATCC 51908 / MS32), this protein is tRNA(Ile)-lysidine synthase.